A 131-amino-acid chain; its full sequence is S-adenosylmethionine decarboxylase proenzyme (131 aa).

S64 (schiff-base intermediate with substrate; via pyruvic acid) is an active-site residue. Residue S64 is modified to Pyruvic acid (Ser); by autocatalysis. H69 (proton acceptor; for processing activity) is an active-site residue. Residue C84 is the Proton donor; for catalytic activity of the active site.

Belongs to the prokaryotic AdoMetDC family. Type 1 subfamily. In terms of assembly, heterotetramer of two alpha and two beta chains arranged as a dimer of alpha/beta heterodimers. Requires pyruvate as cofactor. Is synthesized initially as an inactive proenzyme. Formation of the active enzyme involves a self-maturation process in which the active site pyruvoyl group is generated from an internal serine residue via an autocatalytic post-translational modification. Two non-identical subunits are generated from the proenzyme in this reaction, and the pyruvate is formed at the N-terminus of the alpha chain, which is derived from the carboxyl end of the proenzyme. The post-translation cleavage follows an unusual pathway, termed non-hydrolytic serinolysis, in which the side chain hydroxyl group of the serine supplies its oxygen atom to form the C-terminus of the beta chain, while the remainder of the serine residue undergoes an oxidative deamination to produce ammonia and the pyruvoyl group blocking the N-terminus of the alpha chain.

It carries out the reaction S-adenosyl-L-methionine + H(+) = S-adenosyl 3-(methylsulfanyl)propylamine + CO2. The protein operates within amine and polyamine biosynthesis; S-adenosylmethioninamine biosynthesis; S-adenosylmethioninamine from S-adenosyl-L-methionine: step 1/1. Catalyzes the decarboxylation of S-adenosylmethionine to S-adenosylmethioninamine (dcAdoMet), the propylamine donor required for the synthesis of the polyamines spermine and spermidine from the diamine putrescine. The protein is S-adenosylmethionine decarboxylase proenzyme of Thermoplasma acidophilum (strain ATCC 25905 / DSM 1728 / JCM 9062 / NBRC 15155 / AMRC-C165).